We begin with the raw amino-acid sequence, 104 residues long: UPF0145 protein NP_2600A (104 aa).

It belongs to the UPF0145 family.

This is UPF0145 protein NP_2600A from Natronomonas pharaonis (strain ATCC 35678 / DSM 2160 / CIP 103997 / JCM 8858 / NBRC 14720 / NCIMB 2260 / Gabara) (Halobacterium pharaonis).